A 216-amino-acid polypeptide reads, in one-letter code: Peroxiredoxin (216 aa).

Residues 2 to 158 enclose the Thioredoxin domain; that stretch reads VVIGEKFPEV…ILRLVKALKI (157 aa). Cys-46 serves as the catalytic Cysteine sulfenic acid (-SOH) intermediate. Residue Arg-121 coordinates substrate. Cysteines 205 and 211 form a disulfide.

It belongs to the peroxiredoxin family. Prx6 subfamily. Homodecamer. Pentamer of dimers that assemble into a ring structure.

The protein resides in the cytoplasm. The enzyme catalyses a hydroperoxide + [thioredoxin]-dithiol = an alcohol + [thioredoxin]-disulfide + H2O. Thiol-specific peroxidase that catalyzes the reduction of hydrogen peroxide and organic hydroperoxides to water and alcohols, respectively. Plays a role in cell protection against oxidative stress by detoxifying peroxides. The protein is Peroxiredoxin of Pyrococcus abyssi (strain GE5 / Orsay).